Consider the following 91-residue polypeptide: UPF0250 protein BP0104 (91 aa).

This sequence belongs to the UPF0250 family.

This chain is UPF0250 protein BP0104, found in Bordetella pertussis (strain Tohama I / ATCC BAA-589 / NCTC 13251).